The following is a 714-amino-acid chain: Fatty acid oxidation complex subunit alpha (714 aa).

The segment at 1-190 (MEMASAFTLN…KLGLVDDVVP (190 aa)) is enoyl-CoA hydratase. Positions 306–714 (APLNSVGILG…FWKTTATDLQ (409 aa)) are 3-hydroxyacyl-CoA dehydrogenase.

This sequence in the N-terminal section; belongs to the enoyl-CoA hydratase/isomerase family. The protein in the central section; belongs to the 3-hydroxyacyl-CoA dehydrogenase family. As to quaternary structure, heterotetramer of two alpha chains (FadJ) and two beta chains (FadI).

The protein resides in the cytoplasm. The enzyme catalyses a (3S)-3-hydroxyacyl-CoA = a (2E)-enoyl-CoA + H2O. It carries out the reaction a 4-saturated-(3S)-3-hydroxyacyl-CoA = a (3E)-enoyl-CoA + H2O. The catalysed reaction is a (3S)-3-hydroxyacyl-CoA + NAD(+) = a 3-oxoacyl-CoA + NADH + H(+). It catalyses the reaction (3S)-3-hydroxybutanoyl-CoA = (3R)-3-hydroxybutanoyl-CoA. It participates in lipid metabolism; fatty acid beta-oxidation. Functionally, catalyzes the formation of a hydroxyacyl-CoA by addition of water on enoyl-CoA. Also exhibits 3-hydroxyacyl-CoA epimerase and 3-hydroxyacyl-CoA dehydrogenase activities. This is Fatty acid oxidation complex subunit alpha from Escherichia coli O7:K1 (strain IAI39 / ExPEC).